A 161-amino-acid polypeptide reads, in one-letter code: MAEFKVVVSDETGHTRQFEVDEQDANRFLGRNLGNEVDGNAVGLDGATLELTGGSDDAGRPMREDVSGSDLKELLLEGGVGYEPTRDGERKRITVRGRQVSDETAQVNAAVVGETPIAVLLGEEEPEDADDDGDSDVDADEATDTDAGSEEDNDDDIADAE.

Positions 119–161 (VLLGEEEPEDADDDGDSDVDADEATDTDAGSEEDNDDDIADAE) are disordered. Acidic residues predominate over residues 122 to 161 (GEEEPEDADDDGDSDVDADEATDTDAGSEEDNDDDIADAE).

Belongs to the eukaryotic ribosomal protein eS6 family.

This is Small ribosomal subunit protein eS6 from Haloquadratum walsbyi (strain DSM 16790 / HBSQ001).